Reading from the N-terminus, the 393-residue chain is MKPTCKRVFLIVMDSVGIGEAPDAEKYNDKGADTLGHIAEHRGGLNMPNMAKLGLSNIREIEGIPKAEKPLAYYTKMQEASAGKDTMTGHWELMGLRIDTPFQVFPDGFPKELIDELEKQTGRKVIGNKPASGTAIIDELGPEHMETGALIVYTSADSVLQIAAHEEVIPLEELYRICKIARELTLDEKYMVGRVIARPFIGTPGNFQRTANRHDYALKPFGRTVMNELQDAGYDVIAIGKIADIYDNEGVTKTLRTKSNMDGMDKLVNTLQMNFTGLSFLNLVDFDALYGHRRDPKGYGDALEEFDARLPEVFERLKEDDLLIITADHGNDPVHHGTDHTREYVPLLVYSPSMNGGKQLPLRETFADVGATIAENFGVKMPKYGTSFLQELK.

6 residues coordinate Mn(2+): D14, D287, H292, D328, H329, and H340.

Belongs to the phosphopentomutase family. Mn(2+) serves as cofactor.

It is found in the cytoplasm. It carries out the reaction 2-deoxy-alpha-D-ribose 1-phosphate = 2-deoxy-D-ribose 5-phosphate. It catalyses the reaction alpha-D-ribose 1-phosphate = D-ribose 5-phosphate. It functions in the pathway carbohydrate degradation; 2-deoxy-D-ribose 1-phosphate degradation; D-glyceraldehyde 3-phosphate and acetaldehyde from 2-deoxy-alpha-D-ribose 1-phosphate: step 1/2. Isomerase that catalyzes the conversion of deoxy-ribose 1-phosphate (dRib-1-P) and ribose 1-phosphate (Rib-1-P) to deoxy-ribose 5-phosphate (dRib-5-P) and ribose 5-phosphate (Rib-5-P), respectively. This Geobacillus stearothermophilus (Bacillus stearothermophilus) protein is Phosphopentomutase.